Here is a 759-residue protein sequence, read N- to C-terminus: MNIPSGTFSRSDHFHASSDASLFSSSLPLIQHQNINPRDSYHQSVDEMASGLDHFSGGIGNMLDDGDSHPIGNMLPDDEEELFSGLMDDLNLSSLPATLDDLEDYDLFGSGGGLELETDPYDSLNKGFSRMGFADSNVDNVMPQNIFQNGVGSIAGEHPYGEHPSRTLFVRNINSNVEDSELQALFEQYGHIRTLYTACKQRGFVMVSYNDIRASRAAMRALQGKLLKKRKLDIHFSIPKDNPSEKDVNQGTLVVFNLAPSVSNRDLENIFGVYGEIKEIRETPNKRHHKFVEFFDVRSADAALKALNRTEIAGKRIKLEHSRPGGARRNMMLQMNPELEQDDSYSYLNHVESPLASSPIGNWRNSPIDHPLQSFSKSPIFGNLSPTKNIRYPEFSMKTASVNNDQEGRRFSHLDHLFSSSSYNNASHKASTFQQPQSFGSVSSFGSLNSHPSHVETLSGSEFLWGSPSSSAWPVNPFSSNRENHRFPYSAQNGSLHQLHHIGSAPSGFFPRSPETSSMGSVAFRGASGNMNAQRNLRETSSPNFKMLSAPRRSQLFTGNGSYLWPAATMVSIDDPLEDGSNQQFDSNGNQADIKIQFQLDLSKIMRGEDPRTTLMIKNIPNKYTRNMLLAAIDEKNSGTYDFLYLPIDFKNKCNVGYAFINMVSPKFTIALYEAFNGKKWDKFNSEKVASLAYARIQGKAALIAHFQNSSLMNEDRRCQPIVFDGSESKYPIIRENSQLEASNSTVSHPLVGENTHQS.

2 consecutive RRM domains span residues 166 to 239 and 251 to 324; these read RTLF…FSIP and GTLV…HSRP.

Probable RNA-binding protein that plays a role in meiosis and vegetative growth. This chain is Protein MEI2-like 3 (ML3), found in Arabidopsis thaliana (Mouse-ear cress).